The chain runs to 550 residues: Aldehyde dehydrogenase family 3 member I1, chloroplastic (550 aa).

The transit peptide at 1–59 directs the protein to the chloroplast; that stretch reads MTKLLEINHIQTLCFAKGFSPARLNVATSPFRISRRGGGGYCSNACIPYRLKFTCYATL. Residue 259-264 participates in NAD(+) binding; sequence GGARVA. E281 (proton acceptor) is an active-site residue. C316 acts as the Nucleophile in catalysis.

Belongs to the aldehyde dehydrogenase family. In terms of assembly, homodimer and homomultimer.

The protein localises to the plastid. It localises to the chloroplast. The enzyme catalyses an aldehyde + NAD(+) + H2O = a carboxylate + NADH + 2 H(+). Thiol-based regulation. Inactivation after dimerization under oxidizing conditions. Functionally, involved in oxidative stress tolerance by detoxifying reactive aldehydes derived from lipid peroxidation. Medium- to long-chain saturated aldehydes are preferred substrates, while the short-chain aldehyde propanal is a weak substrate. Can use both NAD(+) and NADP(+), but the coenzyme preference is substrate dependent. In Arabidopsis thaliana (Mouse-ear cress), this protein is Aldehyde dehydrogenase family 3 member I1, chloroplastic (ALDH3I1).